Reading from the N-terminus, the 158-residue chain is uncharacterized protein (158 aa).

The interval 77–132 (AIKRNKIGGSKRSEVHSNRSKNYSSKKFRSQKCRRSRQKKRQNKKPNNSRFISSNK) is disordered. Residues 100–120 (SSKKFRSQKCRRSRQKKRQNK) show a composition bias toward basic residues.

This is an uncharacterized protein from Acanthamoeba polyphaga mimivirus (APMV).